The primary structure comprises 93 residues: Putative ribosomal protein eL43-like (93 aa).

Residues 40–61 (CSFCGKTKMKRRAVKIRHCNSC) form a C4-type zinc finger.

This sequence belongs to the eukaryotic ribosomal protein eL43 family.

This chain is Putative ribosomal protein eL43-like (RPL37AP8), found in Homo sapiens (Human).